We begin with the raw amino-acid sequence, 310 residues long: Thioesterase pytI (310 aa).

2 helical membrane passes run 14–34 and 95–115; these read SLTPLILIHAISGLALPYFAL and LLGGWSMGGMLAIEMAAIFVA. The tract at residues 168-195 is disordered; it reads TLSDDASTTTSSDNSRASTDHGADSEVE. The segment covering 170 to 184 has biased composition (low complexity); it reads SDDASTTTSSDNSRA.

The protein belongs to the AMT4 thioesterase family.

The protein localises to the membrane. It functions in the pathway secondary metabolite biosynthesis. In terms of biological role, thioesterase; part of the gene cluster that mediates the biosynthesis of pyranterreones, a family of antioxidative compounds. The first step of pyranonigrins biosynthesis is performed by the hybrid PKS-NRPS synthetase pytA that condenses 4 malonyl-CoA units ato the acetyl starter unit by the modular PKS of pytA. The acyl chain is then connected to an L-serine through the amide bond by the modular NRPS of pytA. A tetramic acid is formed and released from the PKS-NRPS pytA to give pyranterreone 5 with the help of the thioesterase pytI. Pyranterreone 5 could be methylated by pytC to afford pyranterreone 6. Both pyranterreones 5 and 6 are subsequently oxidized by the FAD-linked oxidoreductase pytB and the cytochrome P450 monooxygenase pytD to form the fused gamma-pyrone core, resulting in pyranterreones 7 and 11, respectively. The hydroxy group at C-8 of pyranterreones 7 and 11 are dehydrated by the aspartyl protease pytH to form a delta-7 double bond to give pyranterreones 3 and 1, 2 accordingly. The exo-methylene of pyranterreone 3 could be reduced into a pendant methyl by reductase pytE to provide pyranterreone 4, also known as cordylactam. Pyranterreone 4 can be reconverted to pyranterreone 3 through pytB-catalyzed dehydrogenation or further oxidized to pyranterreones 9 and 10. The protein is Thioesterase pytI of Aspergillus terreus.